Here is a 516-residue protein sequence, read N- to C-terminus: Probable cytosol aminopeptidase (516 aa).

Residues Lys-288 and Asp-293 each contribute to the Mn(2+) site. The active site involves Lys-300. 3 residues coordinate Mn(2+): Asp-311, Asp-370, and Glu-372. The active site involves Arg-374.

Belongs to the peptidase M17 family. It depends on Mn(2+) as a cofactor.

The protein localises to the cytoplasm. It carries out the reaction Release of an N-terminal amino acid, Xaa-|-Yaa-, in which Xaa is preferably Leu, but may be other amino acids including Pro although not Arg or Lys, and Yaa may be Pro. Amino acid amides and methyl esters are also readily hydrolyzed, but rates on arylamides are exceedingly low.. The catalysed reaction is Release of an N-terminal amino acid, preferentially leucine, but not glutamic or aspartic acids.. Functionally, presumably involved in the processing and regular turnover of intracellular proteins. Catalyzes the removal of unsubstituted N-terminal amino acids from various peptides. This is Probable cytosol aminopeptidase from Cupriavidus taiwanensis (strain DSM 17343 / BCRC 17206 / CCUG 44338 / CIP 107171 / LMG 19424 / R1) (Ralstonia taiwanensis (strain LMG 19424)).